A 207-amino-acid polypeptide reads, in one-letter code: Tereporin-Ts1 (207 aa).

An N-terminal signal peptide occupies residues 1-11 (VIFALVLGNAS). Positions 35–54 (SAGTSLASTILSGLAASGYR) are N-terminal region. Phosphocholine is bound by residues G111, S129, P131, Y164, and Y165.

The protein belongs to the actinoporin family. Conoidea subfamily. Octamer or nonamer in membranes. Monomer in the soluble state. In terms of tissue distribution, expressed by the venom duct.

The protein resides in the secreted. Its subcellular location is the nematocyst. It is found in the target cell membrane. Its function is as follows. Pore-forming protein that forms pores of around 1 nm and causes cardiac stimulation and cytolysis. This is Tereporin-Ts1 from Terebra subulata (Chocolate spotted auger).